We begin with the raw amino-acid sequence, 285 residues long: MGALLWSLLLLLQEAKGFSGDDEDPEEVIGVLQESINLSLEIPSNEEIKHIDWLFQNNIAIVKPGKKGQPAVIMAVDPRYRGRVSISESSYSLHISNLTWEDSGLYNAQVNLKTSESHITKSYHLRVYRRLSKPHITVNSNISEEGVCNISLTCSIERAGMDVTYIWLSSQDSTNTSHEGSVLSTSWRPGDKAPSYTCRVSNPVSNISSRRISVGSFCADPGYPEKPSMLCLLVKSLFLLLLLAILTVGLCLFRAQKSYETPRVRKLKRNRIKLRKKGKSGPTPV.

The signal sequence occupies residues 1 to 17 (MGALLWSLLLLLQEAKG). The Extracellular segment spans residues 18 to 232 (FSGDDEDPEE…YPEKPSMLCL (215 aa)). One can recognise an Ig-like V-type domain in the interval 25-126 (PEEVIGVLQE…SHITKSYHLR (102 aa)). N-linked (GlcNAc...) asparagine glycans are attached at residues Asn37, Asn97, Asn141, Asn149, Asn175, and Asn206. Residues 134–213 (PHITVNSNIS…VSNISSRRIS (80 aa)) enclose the Ig-like C2-type domain. Residues Cys154 and Cys198 are joined by a disulfide bond. The helical transmembrane segment at 233-253 (LVKSLFLLLLLAILTVGLCLF) threads the bilayer. The Cytoplasmic portion of the chain corresponds to 254–285 (RAQKSYETPRVRKLKRNRIKLRKKGKSGPTPV).

It localises to the membrane. In terms of biological role, may play a role in the immune response. The protein is SLAM family member 9 (Slamf9) of Mus musculus (Mouse).